The sequence spans 205 residues: Holliday junction branch migration complex subunit RuvA (205 aa).

Residues 1–64 (MIGRLRGVLV…EDAQLLYGFI (64 aa)) form a domain I region. Positions 65–143 (TKQERALFRL…SLLETSAGSE (79 aa)) are domain II. The flexible linker stretch occupies residues 144–156 (REFMLKSNYTPAP). The tract at residues 157–205 (VVNTAEEDAIAALLSLGYKPAQASKAVSAAFKEGMSSEDLIKSSLKSML) is domain III.

This sequence belongs to the RuvA family. In terms of assembly, homotetramer. Forms an RuvA(8)-RuvB(12)-Holliday junction (HJ) complex. HJ DNA is sandwiched between 2 RuvA tetramers; dsDNA enters through RuvA and exits via RuvB. An RuvB hexamer assembles on each DNA strand where it exits the tetramer. Each RuvB hexamer is contacted by two RuvA subunits (via domain III) on 2 adjacent RuvB subunits; this complex drives branch migration. In the full resolvosome a probable DNA-RuvA(4)-RuvB(12)-RuvC(2) complex forms which resolves the HJ.

The protein resides in the cytoplasm. Functionally, the RuvA-RuvB-RuvC complex processes Holliday junction (HJ) DNA during genetic recombination and DNA repair, while the RuvA-RuvB complex plays an important role in the rescue of blocked DNA replication forks via replication fork reversal (RFR). RuvA specifically binds to HJ cruciform DNA, conferring on it an open structure. The RuvB hexamer acts as an ATP-dependent pump, pulling dsDNA into and through the RuvAB complex. HJ branch migration allows RuvC to scan DNA until it finds its consensus sequence, where it cleaves and resolves the cruciform DNA. This is Holliday junction branch migration complex subunit RuvA from Shewanella woodyi (strain ATCC 51908 / MS32).